The following is a 472-amino-acid chain: ATP-dependent rRNA helicase rrp3 (472 aa).

Residues 1 to 51 form a disordered region; that stretch reads MPDVKKRKIAHEAPEHGSDAESTSSHESVAQQDDTAETQDEAAATETRPAP. The span at 10-19 shows a compositional bias: basic and acidic residues; it reads AHEAPEHGSD. A compositionally biased stretch (polar residues) spans 20–29; that stretch reads AESTSSHESV. A Q motif motif is present at residues 52-80; it reads KSFKDLGIIDQLCEACETMGYKAPTPIQA. The Helicase ATP-binding domain occupies 83–254; that stretch reads IPLALQGRDL…RASLSNPLRV (172 aa). An ATP-binding site is contributed by 96–103; sequence AETGSGKT. The DEAD box signature appears at 202–205; the sequence is DEAD. One can recognise a Helicase C-terminal domain in the interval 282–426; the sequence is YLVYLLNEFV…EYELEKDEVM (145 aa). The disordered stretch occupies residues 451-472; that stretch reads GTKAKKFGKGKRSRDEMDQEEG. The span at 452–462 shows a compositional bias: basic residues; the sequence is TKAKKFGKGKR.

Belongs to the DEAD box helicase family. DDX47/RRP3 subfamily. In terms of assembly, interacts with the SSU processome.

The protein localises to the nucleus. The catalysed reaction is ATP + H2O = ADP + phosphate + H(+). Functionally, ATP-dependent rRNA helicase required for pre-ribosomal RNA processing. Involved in the maturation of the 35S-pre-rRNA and to its cleavage to mature 18S rRNA. This chain is ATP-dependent rRNA helicase rrp3, found in Neosartorya fischeri (strain ATCC 1020 / DSM 3700 / CBS 544.65 / FGSC A1164 / JCM 1740 / NRRL 181 / WB 181) (Aspergillus fischerianus).